The following is a 459-amino-acid chain: UDP-N-acetylmuramate--L-alanine ligase (459 aa).

ATP is bound at residue 118–124 (GTHGKTT).

This sequence belongs to the MurCDEF family.

The protein resides in the cytoplasm. It carries out the reaction UDP-N-acetyl-alpha-D-muramate + L-alanine + ATP = UDP-N-acetyl-alpha-D-muramoyl-L-alanine + ADP + phosphate + H(+). It functions in the pathway cell wall biogenesis; peptidoglycan biosynthesis. Its function is as follows. Cell wall formation. This Clostridium beijerinckii (strain ATCC 51743 / NCIMB 8052) (Clostridium acetobutylicum) protein is UDP-N-acetylmuramate--L-alanine ligase.